We begin with the raw amino-acid sequence, 330 residues long: Aspartate--ammonia ligase (330 aa).

This sequence belongs to the class-II aminoacyl-tRNA synthetase family. AsnA subfamily.

Its subcellular location is the cytoplasm. The enzyme catalyses L-aspartate + NH4(+) + ATP = L-asparagine + AMP + diphosphate + H(+). It participates in amino-acid biosynthesis; L-asparagine biosynthesis; L-asparagine from L-aspartate (ammonia route): step 1/1. The protein is Aspartate--ammonia ligase of Haemophilus influenzae (strain ATCC 51907 / DSM 11121 / KW20 / Rd).